A 446-amino-acid chain; its full sequence is Phosphoglucosamine mutase (446 aa).

The active-site Phosphoserine intermediate is the Ser101. Ser101, Asp240, Asp242, and Asp244 together coordinate Mg(2+). Ser101 is subject to Phosphoserine.

Belongs to the phosphohexose mutase family. The cofactor is Mg(2+). Activated by phosphorylation.

The catalysed reaction is alpha-D-glucosamine 1-phosphate = D-glucosamine 6-phosphate. Its function is as follows. Catalyzes the conversion of glucosamine-6-phosphate to glucosamine-1-phosphate. The chain is Phosphoglucosamine mutase from Coxiella burnetii (strain RSA 331 / Henzerling II).